We begin with the raw amino-acid sequence, 325 residues long: Putative metal ion transporter ZIPCO (325 aa).

Helical transmembrane passes span 5-25 (TFLA…PAYI), 46-66 (IASG…VIIL), and 74-94 (LYYI…TDIL). Asn-106 and Asn-160 each carry an N-linked (GlcNAc...) asparagine glycan. 4 helical membrane-spanning segments follow: residues 179-199 (FFIV…MGSL), 239-259 (IYAW…IFSF), 264-284 (FVEI…SFNM), and 296-316 (HFIS…MILF).

It is found in the cytoplasmic vesicle membrane. Putative transporter for the divalent zinc and iron cations. The protein is Putative metal ion transporter ZIPCO of Plasmodium falciparum (isolate 3D7).